We begin with the raw amino-acid sequence, 147 residues long: Methylated-DNA--protein-cysteine methyltransferase (147 aa).

Cysteine 112 acts as the Nucleophile; methyl group acceptor in catalysis.

This sequence belongs to the MGMT family.

It localises to the cytoplasm. The catalysed reaction is a 6-O-methyl-2'-deoxyguanosine in DNA + L-cysteinyl-[protein] = S-methyl-L-cysteinyl-[protein] + a 2'-deoxyguanosine in DNA. The enzyme catalyses a 4-O-methyl-thymidine in DNA + L-cysteinyl-[protein] = a thymidine in DNA + S-methyl-L-cysteinyl-[protein]. Involved in the cellular defense against the biological effects of O6-methylguanine (O6-MeG) and O4-methylthymine (O4-MeT) in DNA. Repairs the methylated nucleobase in DNA by stoichiometrically transferring the methyl group to a cysteine residue in the enzyme. This is a suicide reaction: the enzyme is irreversibly inactivated. The protein is Methylated-DNA--protein-cysteine methyltransferase of Archaeoglobus fulgidus (strain ATCC 49558 / DSM 4304 / JCM 9628 / NBRC 100126 / VC-16).